Consider the following 377-residue polypeptide: Nitric oxide reductase FlRd-NAD(+) reductase (377 aa).

This sequence belongs to the FAD-dependent oxidoreductase family. It depends on FAD as a cofactor.

The protein localises to the cytoplasm. It carries out the reaction 2 reduced [nitric oxide reductase rubredoxin domain] + NAD(+) + H(+) = 2 oxidized [nitric oxide reductase rubredoxin domain] + NADH. The protein operates within nitrogen metabolism; nitric oxide reduction. Its function is as follows. One of at least two accessory proteins for anaerobic nitric oxide (NO) reductase. Reduces the rubredoxin moiety of NO reductase. The sequence is that of Nitric oxide reductase FlRd-NAD(+) reductase from Klebsiella pneumoniae subsp. pneumoniae (strain ATCC 700721 / MGH 78578).